Here is an 85-residue protein sequence, read N- to C-terminus: UPF0386 protein VF_0869 (85 aa).

Belongs to the UPF0386 family.

The polypeptide is UPF0386 protein VF_0869 (Aliivibrio fischeri (strain ATCC 700601 / ES114) (Vibrio fischeri)).